The primary structure comprises 360 residues: Mannose-1-phosphate guanylyltransferase catalytic subunit beta (360 aa).

The tract at residues 2-222 is substrate-binding domain; the sequence is KALILVGGYG…QGFWMDIGQP (221 aa). D110 contributes to the GDP-alpha-D-mannose binding site. Mg(2+) is bound at residue D110. K162 is an active-site residue. D218 contributes to the GDP-alpha-D-mannose binding site. Residue D218 participates in Mg(2+) binding. Residues 245 to 360 are hexapeptide repeat domain; it reads CSGPGIVGNV…ESVPEPGIIM (116 aa).

It belongs to the transferase hexapeptide repeat family. As to quaternary structure, component of the GMPPA-GMPPB mannose-1-phosphate guanylyltransferase complex composed of 4 GMPPA subunits and 8 GMPPB subunits; the complex is organized into three layers, a central layer made up of 2 GMPPA dimers sandwiched between two layers each made up of 2 GMPPB dimers. GMPPB catalytic activity is reduced when part of the complex and binding of GDP-alpha-D-Mannose by GMPPA induces allosteric feedback inhibition of GMPPB. Requires Mg(2+) as cofactor. Expressed in the liver (at protein level).

It is found in the cytoplasm. It carries out the reaction alpha-D-mannose 1-phosphate + GTP + H(+) = GDP-alpha-D-mannose + diphosphate. The protein operates within nucleotide-sugar biosynthesis; GDP-alpha-D-mannose biosynthesis; GDP-alpha-D-mannose from alpha-D-mannose 1-phosphate (GTP route): step 1/1. With respect to regulation, enzyme activity is reduced by incorporation into the GMPPA-GMPPB mannose-1-phosphate guanylyltransferase complex. Allosterically inhibited, when part of the GMPPA-GMPPB complex, by GDP-alpha-D-mannose binding to GMPPA. Functionally, catalytic subunit of the GMPPA-GMPPB mannose-1-phosphate guanylyltransferase complex. Catalyzes the formation of GDP-mannose, an essential precursor of glycan moieties of glycoproteins and glycolipids. Can catalyze the reverse reaction in vitro. Together with GMPPA regulates GDP-alpha-D-mannose levels. In Sus scrofa (Pig), this protein is Mannose-1-phosphate guanylyltransferase catalytic subunit beta.